Here is a 157-residue protein sequence, read N- to C-terminus: 2-C-methyl-D-erythritol 2,4-cyclodiphosphate synthase (157 aa).

2 residues coordinate a divalent metal cation: aspartate 8 and histidine 10. 4-CDP-2-C-methyl-D-erythritol 2-phosphate contacts are provided by residues 8–10 (DVH) and 34–35 (HS). Histidine 42 provides a ligand contact to a divalent metal cation. 4-CDP-2-C-methyl-D-erythritol 2-phosphate is bound by residues 56-58 (DIG), 61-65 (FPDTD), 100-106 (AQAPKMA), 132-135 (TTTE), phenylalanine 139, and arginine 142.

This sequence belongs to the IspF family. Homotrimer. The cofactor is a divalent metal cation.

The enzyme catalyses 4-CDP-2-C-methyl-D-erythritol 2-phosphate = 2-C-methyl-D-erythritol 2,4-cyclic diphosphate + CMP. The protein operates within isoprenoid biosynthesis; isopentenyl diphosphate biosynthesis via DXP pathway; isopentenyl diphosphate from 1-deoxy-D-xylulose 5-phosphate: step 4/6. Its function is as follows. Involved in the biosynthesis of isopentenyl diphosphate (IPP) and dimethylallyl diphosphate (DMAPP), two major building blocks of isoprenoid compounds. Catalyzes the conversion of 4-diphosphocytidyl-2-C-methyl-D-erythritol 2-phosphate (CDP-ME2P) to 2-C-methyl-D-erythritol 2,4-cyclodiphosphate (ME-CPP) with a corresponding release of cytidine 5-monophosphate (CMP). The protein is 2-C-methyl-D-erythritol 2,4-cyclodiphosphate synthase of Serratia proteamaculans (strain 568).